Consider the following 82-residue polypeptide: Small ribosomal subunit protein uS17 (82 aa).

Belongs to the universal ribosomal protein uS17 family. As to quaternary structure, part of the 30S ribosomal subunit.

One of the primary rRNA binding proteins, it binds specifically to the 5'-end of 16S ribosomal RNA. In Shewanella pealeana (strain ATCC 700345 / ANG-SQ1), this protein is Small ribosomal subunit protein uS17.